Here is a 345-residue protein sequence, read N- to C-terminus: N-acetyl-gamma-glutamyl-phosphate reductase (345 aa).

Cys-149 is a catalytic residue.

Belongs to the NAGSA dehydrogenase family. Type 1 subfamily.

Its subcellular location is the cytoplasm. It catalyses the reaction N-acetyl-L-glutamate 5-semialdehyde + phosphate + NADP(+) = N-acetyl-L-glutamyl 5-phosphate + NADPH + H(+). It participates in amino-acid biosynthesis; L-arginine biosynthesis; N(2)-acetyl-L-ornithine from L-glutamate: step 3/4. Catalyzes the NADPH-dependent reduction of N-acetyl-5-glutamyl phosphate to yield N-acetyl-L-glutamate 5-semialdehyde. The chain is N-acetyl-gamma-glutamyl-phosphate reductase from Halalkalibacterium halodurans (strain ATCC BAA-125 / DSM 18197 / FERM 7344 / JCM 9153 / C-125) (Bacillus halodurans).